Here is a 103-residue protein sequence, read N- to C-terminus: Pyrimidine/purine nucleoside phosphorylase (103 aa).

This sequence belongs to the nucleoside phosphorylase PpnP family.

It carries out the reaction a purine D-ribonucleoside + phosphate = a purine nucleobase + alpha-D-ribose 1-phosphate. The enzyme catalyses adenosine + phosphate = alpha-D-ribose 1-phosphate + adenine. The catalysed reaction is cytidine + phosphate = cytosine + alpha-D-ribose 1-phosphate. It catalyses the reaction guanosine + phosphate = alpha-D-ribose 1-phosphate + guanine. It carries out the reaction inosine + phosphate = alpha-D-ribose 1-phosphate + hypoxanthine. The enzyme catalyses thymidine + phosphate = 2-deoxy-alpha-D-ribose 1-phosphate + thymine. The catalysed reaction is uridine + phosphate = alpha-D-ribose 1-phosphate + uracil. It catalyses the reaction xanthosine + phosphate = alpha-D-ribose 1-phosphate + xanthine. Catalyzes the phosphorolysis of diverse nucleosides, yielding D-ribose 1-phosphate and the respective free bases. Can use uridine, adenosine, guanosine, cytidine, thymidine, inosine and xanthosine as substrates. Also catalyzes the reverse reactions. This is Pyrimidine/purine nucleoside phosphorylase from Shewanella sp. (strain W3-18-1).